Consider the following 420-residue polypeptide: uncharacterized protein (420 aa).

An N-terminal signal peptide occupies residues 1–25 (MRYAMNKIPALLLVGALIIATVASG). Cysteine 26 carries the N-acetylcysteine modification. The S-archaeol cysteine moiety is linked to residue cysteine 26.

This sequence belongs to the bacterial solute-binding protein 1 family.

Its subcellular location is the cell membrane. Functionally, probably part of a binding-protein-dependent transport system PH1036/38/39. This is an uncharacterized protein from Pyrococcus horikoshii (strain ATCC 700860 / DSM 12428 / JCM 9974 / NBRC 100139 / OT-3).